We begin with the raw amino-acid sequence, 118 residues long: Large ribosomal subunit protein uL18 (118 aa).

It belongs to the universal ribosomal protein uL18 family. As to quaternary structure, part of the 50S ribosomal subunit; part of the 5S rRNA/L5/L18/L25 subcomplex. Contacts the 5S and 23S rRNAs.

In terms of biological role, this is one of the proteins that bind and probably mediate the attachment of the 5S RNA into the large ribosomal subunit, where it forms part of the central protuberance. In Mycoplasmopsis pulmonis (strain UAB CTIP) (Mycoplasma pulmonis), this protein is Large ribosomal subunit protein uL18.